Here is a 410-residue protein sequence, read N- to C-terminus: Exopolygalacturonase (410 aa).

Residues 1–22 (MACIDNAMRALFLLALFCVVHG) form the signal peptide. Residues Asn89 and Asn201 are each glycosylated (N-linked (GlcNAc...) asparagine). PbH1 repeat units follow at residues 192–218 (CKDM…HMGD), 219–240 (SSGV…SIGP), 242–262 (TSKV…SIGS), 272–293 (VTDI…RIKA), and 337–377 (ASKV…TMDD). Catalysis depends on Asp233, which acts as the Proton donor. Cysteines 235 and 252 form a disulfide. A glycan (N-linked (GlcNAc...) asparagine) is linked at Asn246. The active site involves His256. N-linked (GlcNAc...) asparagine glycosylation occurs at Asn349. A disulfide bridge links Cys364 with Cys370. Asn387 carries N-linked (GlcNAc...) asparagine glycosylation. Cys393 and Cys409 are oxidised to a cystine.

This sequence belongs to the glycosyl hydrolase 28 family. As to expression, pollen.

It localises to the secreted. Its subcellular location is the cell wall. It carries out the reaction [(1-&gt;4)-alpha-D-galacturonosyl](n) + H2O = alpha-D-galacturonate + [(1-&gt;4)-alpha-D-galacturonosyl](n-1). Functionally, may function in depolymerizing pectin during pollen development, germination, and tube growth. Acts as an exo-polygalacturonase. In Zea mays (Maize), this protein is Exopolygalacturonase (PG2C).